The sequence spans 60 residues: Ixodegrin YY-39 (60 aa).

The signal sequence occupies residues 1–21 (MNAALIAALLILGALTLDATA). A Cell attachment site motif is present at residues 49 to 51 (RGD).

This sequence belongs to the ixodegrin family. Contains 3 disulfide bonds. As to expression, expressed in salivary glands.

The protein localises to the secreted. In terms of biological role, tick salivary platelet aggregation inhibitor that plays an important part in the anti-hemostatic strategy of ticks. Inhibits platelet aggregation induced by ADP, thrombin and thromboxane A2 (TXA2). Blocks platelet adhesion to soluble collagen (most probably through the binding to alpha-2/beta-1 integrin (ITGA2/ITGB1)) and binds to purified glycoprotein IIb/IIIa (ITGA2B/ITGB3) in a dose-dependent manner. In vivo, reduces thrombus weight effectively in a rat arteriovenous shunt model and inhibits thrombosis in a carrageenan-induced mouse tail thrombosis model. This chain is Ixodegrin YY-39, found in Ixodes scapularis (Black-legged tick).